The sequence spans 346 residues: Methionine import ATP-binding protein MetN 1 (346 aa).

The ABC transporter domain maps to isoleucine 2–valine 241. An ATP-binding site is contributed by glycine 38–serine 45.

This sequence belongs to the ABC transporter superfamily. Methionine importer (TC 3.A.1.24) family. As to quaternary structure, the complex is composed of two ATP-binding proteins (MetN), two transmembrane proteins (MetI) and a solute-binding protein (MetQ).

The protein resides in the cell membrane. It catalyses the reaction L-methionine(out) + ATP + H2O = L-methionine(in) + ADP + phosphate + H(+). It carries out the reaction D-methionine(out) + ATP + H2O = D-methionine(in) + ADP + phosphate + H(+). Functionally, part of the ABC transporter complex MetNIQ involved in methionine import. Responsible for energy coupling to the transport system. The chain is Methionine import ATP-binding protein MetN 1 from Bacillus anthracis.